The following is a 143-amino-acid chain: Hemoglobin subunit alpha (143 aa).

Residues 2 to 143 (TLSDKDKSTV…VALALAERYR (142 aa)) enclose the Globin domain. Histidine 60 provides a ligand contact to O2. Residue histidine 89 coordinates heme b.

The protein belongs to the globin family. As to quaternary structure, heterotetramer of two alpha chains and two beta chains. As to expression, red blood cells.

Its function is as follows. Involved in oxygen transport from gills to the various peripheral tissues. The sequence is that of Hemoglobin subunit alpha (hba) from Thunnus thynnus (Atlantic bluefin tuna).